The following is a 264-amino-acid chain: Thiazole synthase (264 aa).

Lys-106 functions as the Schiff-base intermediate with DXP in the catalytic mechanism. 1-deoxy-D-xylulose 5-phosphate contacts are provided by residues Gly-167, 193-194 (AG), and 215-216 (NT).

This sequence belongs to the ThiG family. Homotetramer. Forms heterodimers with either ThiH or ThiS.

It localises to the cytoplasm. It catalyses the reaction [ThiS sulfur-carrier protein]-C-terminal-Gly-aminoethanethioate + 2-iminoacetate + 1-deoxy-D-xylulose 5-phosphate = [ThiS sulfur-carrier protein]-C-terminal Gly-Gly + 2-[(2R,5Z)-2-carboxy-4-methylthiazol-5(2H)-ylidene]ethyl phosphate + 2 H2O + H(+). Its pathway is cofactor biosynthesis; thiamine diphosphate biosynthesis. In terms of biological role, catalyzes the rearrangement of 1-deoxy-D-xylulose 5-phosphate (DXP) to produce the thiazole phosphate moiety of thiamine. Sulfur is provided by the thiocarboxylate moiety of the carrier protein ThiS. In vitro, sulfur can be provided by H(2)S. The sequence is that of Thiazole synthase from Xanthomonas axonopodis pv. citri (strain 306).